Reading from the N-terminus, the 235-residue chain is Lipoprotein-releasing system ATP-binding protein LolD 1 (235 aa).

Residues 5–234 (FEARGITKSY…DGRLQLCTPL (230 aa)) form the ABC transporter domain. ATP is bound at residue 42–49 (GASGSGKT).

The protein belongs to the ABC transporter superfamily. Lipoprotein translocase (TC 3.A.1.125) family. As to quaternary structure, the complex is composed of two ATP-binding proteins (LolD) and two transmembrane proteins (LolC and LolE).

It is found in the cell inner membrane. Part of the ABC transporter complex LolCDE involved in the translocation of mature outer membrane-directed lipoproteins, from the inner membrane to the periplasmic chaperone, LolA. Responsible for the formation of the LolA-lipoprotein complex in an ATP-dependent manner. The chain is Lipoprotein-releasing system ATP-binding protein LolD 1 from Chlorobium luteolum (strain DSM 273 / BCRC 81028 / 2530) (Pelodictyon luteolum).